Reading from the N-terminus, the 627-residue chain is Chaperone protein HtpG (627 aa).

The interval 1 to 339 (MKGQETRGFQ…SNDLPLNVSR (339 aa)) is a; substrate-binding. The segment at 340–555 (EILQDSRVTQ…ADEMSTQMAK (216 aa)) is b. The tract at residues 556 to 627 (LFAAAGQQAP…IRRMNQLLSA (72 aa)) is c.

The protein belongs to the heat shock protein 90 family. As to quaternary structure, homodimer.

The protein localises to the cytoplasm. Its function is as follows. Molecular chaperone. Has ATPase activity. The protein is Chaperone protein HtpG of Pectobacterium atrosepticum (strain SCRI 1043 / ATCC BAA-672) (Erwinia carotovora subsp. atroseptica).